The following is a 304-amino-acid chain: MGIDFLFILKALIIAIVEGLTEFVPVSSTGHMILVGDLIHFNTQSGGFPEMYEVVIQLGAILAVVVLYWRKISSSVVEFLCYIFSFIGLKTSGDKRKYEKRLAESETGFRFGINVIIGTIPAAILGLLFHDEIKEYLFSTKTVAIGFIVGGILLIVIENNFRKRAKRSKIVKDIDKMTYGQSLLVGCFQCLSLWPGMSRSASTIMGGWISGLSTTVATEFTFFLAIPAMVGASGLDLFKFDYSQMNATNWISLILGFIVAFIVSLVVIDKFINYLKKKPMRVFAIYRVFAGIVLAILIFTKVIS.

Helical transmembrane passes span 5–25 (FLFI…EFVP), 47–67 (GFPE…VVVL), 72–92 (ISSS…LKTS), 111–131 (FGIN…LFHD), 137–157 (LFST…LIVI), 209–231 (ISGL…AMVG), 248–268 (TNWI…LVVI), and 283–303 (FAIY…TKVI).

Belongs to the UppP family.

It is found in the cell membrane. The enzyme catalyses di-trans,octa-cis-undecaprenyl diphosphate + H2O = di-trans,octa-cis-undecaprenyl phosphate + phosphate + H(+). Functionally, catalyzes the dephosphorylation of undecaprenyl diphosphate (UPP). Confers resistance to bacitracin. This Clostridium perfringens (strain ATCC 13124 / DSM 756 / JCM 1290 / NCIMB 6125 / NCTC 8237 / Type A) protein is Undecaprenyl-diphosphatase.